The primary structure comprises 154 residues: Lipoprotein signal peptidase (154 aa).

Helical transmembrane passes span 52–72 (ILAGQMWFFYLITTAVIIGIV) and 85–105 (LGVALGLMLGGAIGNFIDRAV). Active-site residues include Asp-111 and Asp-129. Residues 124-144 (IFNIADSSLCVGVMLLFIQML) form a helical membrane-spanning segment.

This sequence belongs to the peptidase A8 family.

It localises to the cell membrane. It carries out the reaction Release of signal peptides from bacterial membrane prolipoproteins. Hydrolyzes -Xaa-Yaa-Zaa-|-(S,diacylglyceryl)Cys-, in which Xaa is hydrophobic (preferably Leu), and Yaa (Ala or Ser) and Zaa (Gly or Ala) have small, neutral side chains.. Its pathway is protein modification; lipoprotein biosynthesis (signal peptide cleavage). Functionally, this protein specifically catalyzes the removal of signal peptides from prolipoproteins. This Bacillus subtilis (strain 168) protein is Lipoprotein signal peptidase.